Reading from the N-terminus, the 300-residue chain is U1 small nuclear ribonucleoprotein 70 kDa homolog (300 aa).

Residues 107–198 enclose the RRM domain; the sequence is RTIFIGRLPY…RTVKYFKPRR (92 aa). 2 disordered regions span residues 204-248 and 263-300; these read GGRG…AYSA and NRPL…APDY. Residues 265–279 show a composition bias toward low complexity; it reads PLLSAATPTAAVTSV.

As to quaternary structure, component of the spliceosome, where it is associated with snRNP U1. Binds stem loop I of U1 snRNA. Interacts with mRNA.

Its subcellular location is the nucleus. Involved in nuclear mRNA splicing. This is U1 small nuclear ribonucleoprotein 70 kDa homolog (SNP1) from Saccharomyces cerevisiae (strain ATCC 204508 / S288c) (Baker's yeast).